Here is a 164-residue protein sequence, read N- to C-terminus: Lipoprotein signal peptidase (164 aa).

The next 4 helical transmembrane spans lie at 8–28 (IVAAVAALIADQASKLWLLFV), 39–59 (VTPFFDLVLAWNTGISYGWFQ), 64–84 (VGATILLAIKAGAVVLLAIWM), and 91–111 (LATIGLGLIIGGAIGNAIDRF). Residues D118 and D140 contribute to the active site. The helical transmembrane segment at 131-151 (YSWYVFNLADVAIVAGVIALL) threads the bilayer.

Belongs to the peptidase A8 family.

Its subcellular location is the cell inner membrane. The catalysed reaction is Release of signal peptides from bacterial membrane prolipoproteins. Hydrolyzes -Xaa-Yaa-Zaa-|-(S,diacylglyceryl)Cys-, in which Xaa is hydrophobic (preferably Leu), and Yaa (Ala or Ser) and Zaa (Gly or Ala) have small, neutral side chains.. The protein operates within protein modification; lipoprotein biosynthesis (signal peptide cleavage). Its function is as follows. This protein specifically catalyzes the removal of signal peptides from prolipoproteins. This chain is Lipoprotein signal peptidase, found in Nitrobacter hamburgensis (strain DSM 10229 / NCIMB 13809 / X14).